The following is a 274-amino-acid chain: Erythronate-4-phosphate dehydrogenase (274 aa).

Asp34 serves as a coordination point for NAD(+). Arg95 is an active-site residue. Residue Asp119 coordinates NAD(+). Residue Glu124 is part of the active site. His141 acts as the Proton donor in catalysis. Residue Gly144 participates in NAD(+) binding. Tyr145 provides a ligand contact to substrate.

This sequence belongs to the D-isomer specific 2-hydroxyacid dehydrogenase family. PdxB subfamily. In terms of assembly, homodimer.

It localises to the cytoplasm. The catalysed reaction is 4-phospho-D-erythronate + NAD(+) = (R)-3-hydroxy-2-oxo-4-phosphooxybutanoate + NADH + H(+). The protein operates within cofactor biosynthesis; pyridoxine 5'-phosphate biosynthesis; pyridoxine 5'-phosphate from D-erythrose 4-phosphate: step 2/5. In terms of biological role, catalyzes the oxidation of erythronate-4-phosphate to 3-hydroxy-2-oxo-4-phosphonooxybutanoate. This chain is Erythronate-4-phosphate dehydrogenase (pdxB), found in Shewanella sp. (strain DB6705).